A 1576-amino-acid polypeptide reads, in one-letter code: Protein Shroom (1576 aa).

Disordered regions lie at residues 1 to 31 (MKMR…ENNN), 46 to 100 (SNGA…TQAG), 112 to 142 (YDQT…DSTS), 187 to 244 (RQSH…SSTE), 267 to 434 (ISES…ISVT), 589 to 609 (VERQ…HSQS), and 621 to 660 (PNNL…SLLP). The segment covering 10–21 (GNGSEMGESTKS) has biased composition (polar residues). Composition is skewed to low complexity over residues 46-69 (SNGA…AGSV), 76-91 (HNSS…GSSL), and 128-142 (SEGY…DSTS). The span at 189–211 (SHSHSHSHAHSHSNSHGHSHGHA) shows a compositional bias: basic residues. Composition is skewed to low complexity over residues 212-244 (HSAS…SSTE) and 267-283 (ISES…SSRV). Over residues 305–317 (DSSPTASNSSQMM) the composition is skewed to polar residues. The span at 376–388 (QSTLSTQSSLLEL) shows a compositional bias: low complexity. The span at 399–415 (MGQSHSMGDLQQKNPHQ) shows a compositional bias: polar residues. Serine 404 carries the post-translational modification Phosphoserine. Residues 445 to 920 (APQPPAGKPS…LESNQQKRSN (476 aa)) form an F-actin binding region required for planar polarity and cortical localization region. The span at 633–643 (TGSNSASTRDC) shows a compositional bias: polar residues. Phosphoserine occurs at positions 667 and 668. 7 disordered regions span residues 699–728 (ISFN…SSAT), 743–823 (AALA…NCFA), 849–876 (VPKK…HHAT), 910–939 (NLES…NTDP), 1036–1055 (GYGK…SQSY), 1091–1116 (PTAT…SHSD), and 1210–1244 (SFAN…DVHD). Positions 748–759 (QQHHPQQHRHAQ) are enriched in basic residues. Pro residues predominate over residues 798-816 (PLPPPPPPEVLQPRPPPSP). Polar residues-rich tracts occupy residues 910 to 923 (NLES…NSKA) and 1042 to 1055 (KPVT…SQSY). Pro residues-rich tracts occupy residues 1094–1108 (TPTP…PPRL) and 1217–1229 (MTPP…PPPL). Positions 1230–1239 (EPEEEEEQEE) are enriched in acidic residues. Residues 1232–1296 (EEEEEQEEND…LEAAREEHQT (65 aa)) are a coiled coil. The ASD2 domain maps to 1305 to 1572 (RQPIELDYEQ…QLSSLSDALV (268 aa)).

Belongs to the shroom family. In terms of assembly, monomer or homodimer. Interacts with Rok. As to quaternary structure, binds (via N-terminus) to F-actin.

It is found in the cell junction. The protein localises to the adherens junction. It localises to the cytoplasm. The protein resides in the cytoskeleton. Its subcellular location is the apical cell membrane. In terms of biological role, binds to Rho-kinase Rok and targets it to the apical cell cortex where it mediates apical constriction. During embryogenic axis elongation, required for the localization to adherens junctions and the establishment of planar polarization of both Rho-kinase Rok and myosin regulatory light chain sqh. May be involved in the assembly of microtubule arrays during cell elongation. The polypeptide is Protein Shroom (Drosophila melanogaster (Fruit fly)).